Consider the following 200-residue polypeptide: Glycerol-3-phosphate acyltransferase (200 aa).

A run of 5 helical transmembrane segments spans residues 3–23 (YIYSIFIGYFFGAIPFSFFIA), 50–70 (FYGALAFFFDIFKAYIAVFLV), 75–95 (IKFMLIAGTMAVLGHCYSIFL), 109–129 (VFLAVYPWSGLVFFGVWLFIV), and 134–154 (YVSLASMIGLIFASIFVFFAG).

It belongs to the PlsY family. In terms of assembly, probably interacts with PlsX.

Its subcellular location is the cell inner membrane. It carries out the reaction an acyl phosphate + sn-glycerol 3-phosphate = a 1-acyl-sn-glycero-3-phosphate + phosphate. It functions in the pathway lipid metabolism; phospholipid metabolism. Its function is as follows. Catalyzes the transfer of an acyl group from acyl-phosphate (acyl-PO(4)) to glycerol-3-phosphate (G3P) to form lysophosphatidic acid (LPA). This enzyme utilizes acyl-phosphate as fatty acyl donor, but not acyl-CoA or acyl-ACP. The chain is Glycerol-3-phosphate acyltransferase from Thermosipho melanesiensis (strain DSM 12029 / CIP 104789 / BI429).